The chain runs to 77 residues: MDFNFIEFLGYMATFFVAASFLFKSIVHLRIVNSIGAILFVIYSLIITAYPVALLNAFLVVVNIYQLWRLKQENLSK.

2 helical membrane-spanning segments follow: residues 3 to 23 (FNFI…SFLF) and 35 to 55 (IGAI…VALL).

It localises to the cell membrane. This is an uncharacterized protein from Haemophilus influenzae (strain ATCC 51907 / DSM 11121 / KW20 / Rd).